Reading from the N-terminus, the 369-residue chain is D-alanine--D-alanine ligase (369 aa).

Residues 152–359 (KKLFAAEGLP…YPSLLATMVE (208 aa)) enclose the ATP-grasp domain. Position 180–235 (180–235 (RERLGLPVFVKPARGGSSIGVSRVSSWDELDAAVAAARDHDPKVIVEAAIAGRELE)) interacts with ATP. Mg(2+)-binding residues include Asp-314, Glu-326, and Asn-328.

It belongs to the D-alanine--D-alanine ligase family. Requires Mg(2+) as cofactor. Mn(2+) is required as a cofactor.

The protein resides in the cytoplasm. It catalyses the reaction 2 D-alanine + ATP = D-alanyl-D-alanine + ADP + phosphate + H(+). It participates in cell wall biogenesis; peptidoglycan biosynthesis. In terms of biological role, cell wall formation. In Mycobacterium avium (strain 104), this protein is D-alanine--D-alanine ligase.